A 1337-amino-acid chain; its full sequence is Phosphoribosylformylglycinamidine synthase (1337 aa).

Phosphoserine is present on S215. Residues 322–333 (GATTGTGGRIRD) and 402–404 (AGF) each bind ATP. T619 and T622 each carry phosphothreonine. Residue A705 coordinates ATP. Mg(2+)-binding residues include D706, E745, N749, and D908. S910 is a binding site for ATP. In terms of domain architecture, Glutamine amidotransferase type-1 spans 1063–1301 (RVAILREEGS…ALMPHPERAV (239 aa)). C1157 acts as the Nucleophile in catalysis. Active-site residues include H1296 and E1298.

The protein in the N-terminal section; belongs to the FGAMS family.

The protein localises to the cytoplasm. The catalysed reaction is N(2)-formyl-N(1)-(5-phospho-beta-D-ribosyl)glycinamide + L-glutamine + ATP + H2O = 2-formamido-N(1)-(5-O-phospho-beta-D-ribosyl)acetamidine + L-glutamate + ADP + phosphate + H(+). It participates in purine metabolism; IMP biosynthesis via de novo pathway; 5-amino-1-(5-phospho-D-ribosyl)imidazole from N(2)-formyl-N(1)-(5-phospho-D-ribosyl)glycinamide: step 1/2. Phosphoribosylformylglycinamidine synthase involved in the purines biosynthetic pathway. Catalyzes the ATP-dependent conversion of formylglycinamide ribonucleotide (FGAR) and glutamine to yield formylglycinamidine ribonucleotide (FGAM) and glutamate. This is Phosphoribosylformylglycinamidine synthase (Pfas) from Mus musculus (Mouse).